The following is a 159-amino-acid chain: NAD(P)H-quinone oxidoreductase subunit J, chloroplastic (159 aa).

Belongs to the complex I 30 kDa subunit family. In terms of assembly, NDH is composed of at least 16 different subunits, 5 of which are encoded in the nucleus.

The protein localises to the plastid. It localises to the chloroplast thylakoid membrane. The enzyme catalyses a plastoquinone + NADH + (n+1) H(+)(in) = a plastoquinol + NAD(+) + n H(+)(out). It carries out the reaction a plastoquinone + NADPH + (n+1) H(+)(in) = a plastoquinol + NADP(+) + n H(+)(out). NDH shuttles electrons from NAD(P)H:plastoquinone, via FMN and iron-sulfur (Fe-S) centers, to quinones in the photosynthetic chain and possibly in a chloroplast respiratory chain. The immediate electron acceptor for the enzyme in this species is believed to be plastoquinone. Couples the redox reaction to proton translocation, and thus conserves the redox energy in a proton gradient. This Oryza nivara (Indian wild rice) protein is NAD(P)H-quinone oxidoreductase subunit J, chloroplastic.